Here is a 110-residue protein sequence, read N- to C-terminus: Protein YcgL (110 aa).

The region spanning 14 to 98 is the YcgL domain; that stretch reads MFCVIYRSSK…PPEDLLKQHL (85 aa). A disordered region spans residues 88–110; it reads PPPEDLLKQHLSSVGQNTSHADR. Residues 97 to 110 show a composition bias toward polar residues; it reads HLSSVGQNTSHADR.

The sequence is that of Protein YcgL from Salmonella typhi.